The primary structure comprises 500 residues: Lysine--tRNA ligase (500 aa).

Mg(2+) is bound by residues glutamate 410 and glutamate 417.

The protein belongs to the class-II aminoacyl-tRNA synthetase family. Homodimer. Requires Mg(2+) as cofactor.

It localises to the cytoplasm. The catalysed reaction is tRNA(Lys) + L-lysine + ATP = L-lysyl-tRNA(Lys) + AMP + diphosphate. The polypeptide is Lysine--tRNA ligase (Shewanella oneidensis (strain ATCC 700550 / JCM 31522 / CIP 106686 / LMG 19005 / NCIMB 14063 / MR-1)).